Reading from the N-terminus, the 392-residue chain is MKRAILIVLDGVGIGELPDAAKYNDEGSNTLVNTAKALGGLSLPNMGKMGLSNIEEIPGTPKEDNPIAFYGKMAEASPGKDSTTGHWEIAGLILDRPFPVYPNGFPKEVIEAFEKAIGRKVIGNKPASGTEIIKELGEYHMKTGYPIVYTSADSVFQIAAHEEVIPVEELYRMCEIARNILQGEHAVARVIARPFTGSPGNFYRTPRRKDFSLPPFKATLLDYLKENNYDVIGVGKIEDLFAGRGLTLSLHQDNNSEGIKNIFEAWNKLREGLIFVNLVDFDMLYGHRNDPEGMGKALKDFDDALPDIMKLLSDFDLLIITADHGNDPTTPSTDHSREYVPLLIYSPNFKRTFPLGIRSTFSDLGKTLADFFNVKNDLHGESFLSTIEEGWK.

Mn(2+)-binding residues include Asp10, Asp282, His287, Asp323, His324, and His335.

The protein belongs to the phosphopentomutase family. Mn(2+) serves as cofactor.

It localises to the cytoplasm. It catalyses the reaction 2-deoxy-alpha-D-ribose 1-phosphate = 2-deoxy-D-ribose 5-phosphate. The enzyme catalyses alpha-D-ribose 1-phosphate = D-ribose 5-phosphate. It functions in the pathway carbohydrate degradation; 2-deoxy-D-ribose 1-phosphate degradation; D-glyceraldehyde 3-phosphate and acetaldehyde from 2-deoxy-alpha-D-ribose 1-phosphate: step 1/2. Functionally, isomerase that catalyzes the conversion of deoxy-ribose 1-phosphate (dRib-1-P) and ribose 1-phosphate (Rib-1-P) to deoxy-ribose 5-phosphate (dRib-5-P) and ribose 5-phosphate (Rib-5-P), respectively. The protein is Phosphopentomutase of Dictyoglomus thermophilum (strain ATCC 35947 / DSM 3960 / H-6-12).